Consider the following 312-residue polypeptide: Acetylglutamate kinase (312 aa).

Substrate-binding positions include 76–77 (GG), arginine 98, and asparagine 199.

The protein belongs to the acetylglutamate kinase family. ArgB subfamily.

The protein localises to the cytoplasm. The catalysed reaction is N-acetyl-L-glutamate + ATP = N-acetyl-L-glutamyl 5-phosphate + ADP. It functions in the pathway amino-acid biosynthesis; L-arginine biosynthesis; N(2)-acetyl-L-ornithine from L-glutamate: step 2/4. In terms of biological role, catalyzes the ATP-dependent phosphorylation of N-acetyl-L-glutamate. This chain is Acetylglutamate kinase, found in Beutenbergia cavernae (strain ATCC BAA-8 / DSM 12333 / CCUG 43141 / JCM 11478 / NBRC 16432 / NCIMB 13614 / HKI 0122).